Consider the following 190-residue polypeptide: Potassium-transporting ATPase KdpC subunit (190 aa).

A helical transmembrane segment spans residues 11 to 31 (LIVLMSLITGVAYPLVVTGVA).

It belongs to the KdpC family. As to quaternary structure, the system is composed of three essential subunits: KdpA, KdpB and KdpC.

It localises to the cell inner membrane. Part of the high-affinity ATP-driven potassium transport (or Kdp) system, which catalyzes the hydrolysis of ATP coupled with the electrogenic transport of potassium into the cytoplasm. This subunit acts as a catalytic chaperone that increases the ATP-binding affinity of the ATP-hydrolyzing subunit KdpB by the formation of a transient KdpB/KdpC/ATP ternary complex. The polypeptide is Potassium-transporting ATPase KdpC subunit (Pseudomonas syringae pv. tomato (strain ATCC BAA-871 / DC3000)).